A 658-amino-acid chain; its full sequence is Structure-specific endonuclease subunit SLX1 (658 aa).

Positions 12-92 constitute a GIY-YIG domain; it reads PFYACYFLRS…AKPHLSRHLK (81 aa). 4 disordered regions span residues 29–52, 239–269, 288–328, and 594–658; these read YIGS…QGAY, GVAE…ETLP, PIPQ…NGVD, and TTSR…IDLT. Basic and acidic residues-rich tracts occupy residues 308-324 and 627-640; these read KLSD…HDAE and SKID…DTKK. The span at 641–652 shows a compositional bias: polar residues; the sequence is NTTQKAKSNETS.

Belongs to the SLX1 family. Forms a heterodimer with SLX4. It depends on a divalent metal cation as a cofactor.

It localises to the nucleus. Its function is as follows. Catalytic subunit of the SLX1-SLX4 structure-specific endonuclease that resolves DNA secondary structures generated during DNA repair and recombination. Has endonuclease activity towards branched DNA substrates, introducing single-strand cuts in duplex DNA close to junctions with ss-DNA. This is Structure-specific endonuclease subunit SLX1 from Mycosarcoma maydis (Corn smut fungus).